A 630-amino-acid chain; its full sequence is 1-deoxy-D-xylulose-5-phosphate synthase (630 aa).

Thiamine diphosphate contacts are provided by residues His-72 and 113-115; that span reads GHS. Position 144 (Asp-144) interacts with Mg(2+). Residues 145–146, Asn-173, Tyr-284, and Glu-367 each bind thiamine diphosphate; that span reads GA. Residue Asn-173 coordinates Mg(2+).

Belongs to the transketolase family. DXPS subfamily. In terms of assembly, homodimer. Requires Mg(2+) as cofactor. Thiamine diphosphate serves as cofactor.

The catalysed reaction is D-glyceraldehyde 3-phosphate + pyruvate + H(+) = 1-deoxy-D-xylulose 5-phosphate + CO2. It participates in metabolic intermediate biosynthesis; 1-deoxy-D-xylulose 5-phosphate biosynthesis; 1-deoxy-D-xylulose 5-phosphate from D-glyceraldehyde 3-phosphate and pyruvate: step 1/1. Its function is as follows. Catalyzes the acyloin condensation reaction between C atoms 2 and 3 of pyruvate and glyceraldehyde 3-phosphate to yield 1-deoxy-D-xylulose-5-phosphate (DXP). This Bacillus cereus (strain AH187) protein is 1-deoxy-D-xylulose-5-phosphate synthase.